Here is a 372-residue protein sequence, read N- to C-terminus: Dual-specificity RNA methyltransferase RlmN (372 aa).

The active-site Proton acceptor is the glutamate 92. One can recognise a Radical SAM core domain in the interval 98-337; sequence ETDRATLCVS…VILRKTRGDD (240 aa). A disulfide bond links cysteine 105 and cysteine 342. [4Fe-4S] cluster-binding residues include cysteine 112, cysteine 116, and cysteine 119. Residues 166–167, serine 198, 220–222, and asparagine 299 each bind S-adenosyl-L-methionine; these read GE and SLH. Cysteine 342 acts as the S-methylcysteine intermediate in catalysis.

This sequence belongs to the radical SAM superfamily. RlmN family. [4Fe-4S] cluster serves as cofactor.

It is found in the cytoplasm. The catalysed reaction is adenosine(2503) in 23S rRNA + 2 reduced [2Fe-2S]-[ferredoxin] + 2 S-adenosyl-L-methionine = 2-methyladenosine(2503) in 23S rRNA + 5'-deoxyadenosine + L-methionine + 2 oxidized [2Fe-2S]-[ferredoxin] + S-adenosyl-L-homocysteine. It carries out the reaction adenosine(37) in tRNA + 2 reduced [2Fe-2S]-[ferredoxin] + 2 S-adenosyl-L-methionine = 2-methyladenosine(37) in tRNA + 5'-deoxyadenosine + L-methionine + 2 oxidized [2Fe-2S]-[ferredoxin] + S-adenosyl-L-homocysteine. Specifically methylates position 2 of adenine 2503 in 23S rRNA and position 2 of adenine 37 in tRNAs. m2A2503 modification seems to play a crucial role in the proofreading step occurring at the peptidyl transferase center and thus would serve to optimize ribosomal fidelity. This is Dual-specificity RNA methyltransferase RlmN from Histophilus somni (strain 129Pt) (Haemophilus somnus).